A 98-amino-acid chain; its full sequence is Citrate lyase acyl carrier protein (98 aa).

An O-(phosphoribosyl dephospho-coenzyme A)serine modification is found at serine 14.

The protein belongs to the CitD family. In terms of assembly, oligomer with a subunit composition of (alpha,beta,gamma)6.

It is found in the cytoplasm. Its function is as follows. Covalent carrier of the coenzyme of citrate lyase. The sequence is that of Citrate lyase acyl carrier protein from Vibrio cholerae serotype O1 (strain ATCC 39541 / Classical Ogawa 395 / O395).